Here is a 3096-residue protein sequence, read N- to C-terminus: Unconventional myosin-XVB (3096 aa).

4 disordered regions span residues 1 to 330 (MGRN…GPED), 389 to 489 (RPPE…GWGR), 508 to 540 (GGMP…ETPD), and 553 to 649 (AGRA…GPRL). A compositionally biased stretch (low complexity) spans 19–33 (ASGEQESGSASADGA). Residues 34–50 (PSRERRSDRGQADRAKP) show a composition bias toward basic and acidic residues. A compositionally biased stretch (basic residues) spans 124–143 (RRRRKRKDKGPSARRGRRTP). Composition is skewed to basic and acidic residues over residues 212 to 222 (DWPHADTRGRE) and 261 to 288 (TFED…RGAE). A compositionally biased stretch (low complexity) spans 307–330 (AVGQVPAAAGEGEAGAAAGAGPED). Residues 406–416 (WGRRKPDEGRG) are compositionally biased toward basic and acidic residues. The segment covering 417 to 426 (HGRGSKGRGR) has biased composition (basic residues). Residues 427–489 (GKADEGRGHE…HQRGYEGWGR (63 aa)) are compositionally biased toward basic and acidic residues. One can recognise a Myosin motor domain in the interval 720–1394 (EDMEDLARLR…GWQRLEELRD (675 aa)). 818-825 (GHSGSGKT) contacts ATP. Positions 1273 to 1295 (LEDLIARLGRSHVYFIQCLTPNP) are actin-binding. In terms of domain architecture, IQ spans 1414-1443 (RQRVLPRMQARMRGFQARKRYLRRRAALGQ). Positions 1551–1702 (RPGQPLAKPL…PTQLEWLAGW (152 aa)) constitute a MyTH4 1 domain. 3 disordered regions span residues 1802–1833 (PGIQ…VQRS), 1963–2026 (MQQR…PKSF), and 2040–2262 (QITV…LPED). The segment covering 1808–1820 (SLPPGPPPGPAPT) has biased composition (pro residues). The span at 1963–1980 (MQQRQQQARASEAASQAS) shows a compositional bias: low complexity. The span at 2059–2076 (AQEEEEEEEEEEEQEEQE) shows a compositional bias: acidic residues. The span at 2102–2116 (APKEAEAEPAKETAA) shows a compositional bias: basic and acidic residues. A compositionally biased stretch (pro residues) spans 2159–2170 (GPVPVPVQPSRP). A compositionally biased stretch (basic and acidic residues) spans 2176-2185 (RKIDPKDEAL). Pro residues-rich tracts occupy residues 2199–2217 (MLSP…PRPK) and 2247–2261 (HTPP…PLPE). The SH3 domain occupies 2481 to 2542 (KDSGYVIALR…PADIVQPAAA (62 aa)). Residues 2548-2567 (SKEQRSGWHKGQLSNGEPGL) are disordered. The MyTH4 2 domain occupies 2643 to 2789 (YTKAPIQESL…PPPGEMKAFL (147 aa)). Positions 2795-3096 (RLLLIHLPGG…ASCTEWPSIN (302 aa)) constitute an FERM domain.

Belongs to the TRAFAC class myosin-kinesin ATPase superfamily. Myosin family. As to expression, detected in brain, stomach and kidney.

The protein localises to the cytoplasm. This Homo sapiens (Human) protein is Unconventional myosin-XVB.